The primary structure comprises 135 residues: Large ribosomal subunit protein mL41 (135 aa).

A mitochondrion-targeting transit peptide spans 1–13 (MGVLSALARGFVR).

Belongs to the mitochondrion-specific ribosomal protein mL41 family. Component of the mitochondrial ribosome large subunit (39S) which comprises a 16S rRNA and about 50 distinct proteins.

It localises to the mitochondrion. In terms of biological role, component of the mitochondrial ribosome large subunit. Also involved in apoptosis and cell cycle. This Danio rerio (Zebrafish) protein is Large ribosomal subunit protein mL41 (mrpl41).